The primary structure comprises 332 residues: L-lactate dehydrogenase A chain (332 aa).

N-acetylalanine is present on Ala-2. N6-acetyllysine; alternate is present on Lys-5. Lys-5 is modified (N6-succinyllysine; alternate). Residue Lys-14 is modified to N6-acetyllysine. Thr-18 bears the Phosphothreonine mark. An NAD(+)-binding site is contributed by 29-57; the sequence is GAVGMACAISILMKDLADELALVDVIEDK. An N6-acetyllysine; alternate modification is found at Lys-57. Lys-57 participates in a covalent cross-link: Glycyl lysine isopeptide (Lys-Gly) (interchain with G-Cter in SUMO2); alternate. Lys-81 bears the N6-acetyllysine mark. Position 99 (Arg-99) interacts with NAD(+). Arg-106 lines the substrate pocket. Lys-118 is modified (N6-acetyllysine; alternate). Residue Lys-118 is modified to N6-succinyllysine; alternate. Lys-126 is modified (N6-acetyllysine). Residues Asn-138 and Arg-169 each coordinate substrate. The Proton acceptor role is filled by His-193. Residues Lys-224 and Lys-232 each carry the N6-acetyllysine modification. Residue Tyr-239 is modified to Phosphotyrosine. An N6-acetyllysine modification is found at Lys-243. Residue Thr-248 coordinates substrate. Position 309 is a phosphothreonine (Thr-309). Ser-310 carries the post-translational modification Phosphoserine. The residue at position 318 (Lys-318) is an N6-acetyllysine; alternate. The residue at position 318 (Lys-318) is an N6-succinyllysine; alternate. The residue at position 322 (Thr-322) is a Phosphothreonine.

It belongs to the LDH/MDH superfamily. LDH family. As to quaternary structure, homotetramer. Interacts with PTEN upstream reading frame protein MP31. ISGylated.

The protein resides in the cytoplasm. The enzyme catalyses (S)-lactate + NAD(+) = pyruvate + NADH + H(+). The protein operates within fermentation; pyruvate fermentation to lactate; (S)-lactate from pyruvate: step 1/1. Functionally, interconverts simultaneously and stereospecifically pyruvate and lactate with concomitant interconversion of NADH and NAD(+). The polypeptide is L-lactate dehydrogenase A chain (LDHA) (Pongo abelii (Sumatran orangutan)).